The primary structure comprises 149 residues: Transcriptional repressor NrdR (149 aa).

Residues 3-34 fold into a zinc finger; sequence CPFCTAEETKVIDSRLAADGYQIRRRRECIGC. The ATP-cone domain occupies 49–139; it reads PYIIKNNGNR…VYLSFDDIEE (91 aa).

It belongs to the NrdR family. Zn(2+) serves as cofactor.

Its function is as follows. Negatively regulates transcription of bacterial ribonucleotide reductase nrd genes and operons by binding to NrdR-boxes. The sequence is that of Transcriptional repressor NrdR from Haemophilus ducreyi (strain 35000HP / ATCC 700724).